The primary structure comprises 291 residues: 4-hydroxy-tetrahydrodipicolinate synthase (291 aa).

Threonine 45 provides a ligand contact to pyruvate. The active-site Proton donor/acceptor is tyrosine 133. The active-site Schiff-base intermediate with substrate is lysine 161. Isoleucine 203 is a pyruvate binding site.

This sequence belongs to the DapA family. Homotetramer; dimer of dimers.

It is found in the cytoplasm. It catalyses the reaction L-aspartate 4-semialdehyde + pyruvate = (2S,4S)-4-hydroxy-2,3,4,5-tetrahydrodipicolinate + H2O + H(+). It participates in amino-acid biosynthesis; L-lysine biosynthesis via DAP pathway; (S)-tetrahydrodipicolinate from L-aspartate: step 3/4. Catalyzes the condensation of (S)-aspartate-beta-semialdehyde [(S)-ASA] and pyruvate to 4-hydroxy-tetrahydrodipicolinate (HTPA). The chain is 4-hydroxy-tetrahydrodipicolinate synthase from Saccharophagus degradans (strain 2-40 / ATCC 43961 / DSM 17024).